The following is a 256-amino-acid chain: Thiazole synthase (256 aa).

Residue K98 is the Schiff-base intermediate with DXP of the active site. 1-deoxy-D-xylulose 5-phosphate is bound by residues G159, 185–186, and 207–208; these read AG and NT.

This sequence belongs to the ThiG family. In terms of assembly, homotetramer. Forms heterodimers with either ThiH or ThiS.

The protein localises to the cytoplasm. The enzyme catalyses [ThiS sulfur-carrier protein]-C-terminal-Gly-aminoethanethioate + 2-iminoacetate + 1-deoxy-D-xylulose 5-phosphate = [ThiS sulfur-carrier protein]-C-terminal Gly-Gly + 2-[(2R,5Z)-2-carboxy-4-methylthiazol-5(2H)-ylidene]ethyl phosphate + 2 H2O + H(+). It functions in the pathway cofactor biosynthesis; thiamine diphosphate biosynthesis. Its function is as follows. Catalyzes the rearrangement of 1-deoxy-D-xylulose 5-phosphate (DXP) to produce the thiazole phosphate moiety of thiamine. Sulfur is provided by the thiocarboxylate moiety of the carrier protein ThiS. In vitro, sulfur can be provided by H(2)S. This chain is Thiazole synthase, found in Aliivibrio fischeri (strain ATCC 700601 / ES114) (Vibrio fischeri).